The sequence spans 395 residues: Putative 8-amino-7-oxononanoate synthase (395 aa).

Arg-23 serves as a coordination point for substrate. 110–111 is a binding site for pyridoxal 5'-phosphate; the sequence is GY. His-135 is a binding site for substrate. Residues Ser-182, 207–210, and 239–242 contribute to the pyridoxal 5'-phosphate site; these read DEAH and TFSK. Position 242 is an N6-(pyridoxal phosphate)lysine (Lys-242). A substrate-binding site is contributed by Thr-356.

It belongs to the class-II pyridoxal-phosphate-dependent aminotransferase family. BioF subfamily. In terms of assembly, homodimer. Requires pyridoxal 5'-phosphate as cofactor.

It carries out the reaction 6-carboxyhexanoyl-[ACP] + L-alanine + H(+) = (8S)-8-amino-7-oxononanoate + holo-[ACP] + CO2. The protein operates within cofactor biosynthesis; biotin biosynthesis. In terms of biological role, catalyzes the decarboxylative condensation of pimeloyl-[acyl-carrier protein] and L-alanine to produce 8-amino-7-oxononanoate (AON), [acyl-carrier protein], and carbon dioxide. The chain is Putative 8-amino-7-oxononanoate synthase (bioF) from Bacillus cereus (strain ZK / E33L).